A 142-amino-acid polypeptide reads, in one-letter code: Glia maturation factor beta (142 aa).

Residue serine 2 is modified to N-acetylserine. The region spanning serine 4 to glycine 139 is the ADF-H domain.

Belongs to the actin-binding proteins ADF family. GMF subfamily. In terms of processing, phosphorylated; stimulated by phorbol ester.

This protein causes differentiation of brain cells, stimulation of neural regeneration, and inhibition of proliferation of tumor cells. This chain is Glia maturation factor beta (GMFB), found in Homo sapiens (Human).